The sequence spans 185 residues: Large ribosomal subunit protein uL5 (185 aa).

The protein belongs to the universal ribosomal protein uL5 family. In terms of assembly, part of the 50S ribosomal subunit; part of the 5S rRNA/L5/L18/L25 subcomplex. Contacts the 5S rRNA and the P site tRNA. Forms a bridge to the 30S subunit in the 70S ribosome.

Its function is as follows. This is one of the proteins that bind and probably mediate the attachment of the 5S RNA into the large ribosomal subunit, where it forms part of the central protuberance. In the 70S ribosome it contacts protein S13 of the 30S subunit (bridge B1b), connecting the 2 subunits; this bridge is implicated in subunit movement. Contacts the P site tRNA; the 5S rRNA and some of its associated proteins might help stabilize positioning of ribosome-bound tRNAs. This is Large ribosomal subunit protein uL5 from Rhodopseudomonas palustris (strain BisB5).